Reading from the N-terminus, the 336-residue chain is Holliday junction branch migration complex subunit RuvB (336 aa).

The interval 1-182 is large ATPase domain (RuvB-L); it reads MKERIVNLET…FGMSFRMQFY (182 aa). Residues Leu21, Arg22, Gly63, Lys66, Thr67, Ser68, 129–131, Arg172, Tyr182, and Arg219 contribute to the ATP site; that span reads EDF. Mg(2+) is bound at residue Thr67. A small ATPAse domain (RuvB-S) region spans residues 183-253; it reads SPSELALIIK…ITLHALNELG (71 aa). Positions 256-336 are head domain (RuvB-H); it reads ELGFDEADLA…IPTLKSQTLF (81 aa). DNA is bound by residues Arg310 and Arg315.

This sequence belongs to the RuvB family. In terms of assembly, homohexamer. Forms an RuvA(8)-RuvB(12)-Holliday junction (HJ) complex. HJ DNA is sandwiched between 2 RuvA tetramers; dsDNA enters through RuvA and exits via RuvB. An RuvB hexamer assembles on each DNA strand where it exits the tetramer. Each RuvB hexamer is contacted by two RuvA subunits (via domain III) on 2 adjacent RuvB subunits; this complex drives branch migration. In the full resolvosome a probable DNA-RuvA(4)-RuvB(12)-RuvC(2) complex forms which resolves the HJ.

The protein localises to the cytoplasm. It carries out the reaction ATP + H2O = ADP + phosphate + H(+). The RuvA-RuvB-RuvC complex processes Holliday junction (HJ) DNA during genetic recombination and DNA repair, while the RuvA-RuvB complex plays an important role in the rescue of blocked DNA replication forks via replication fork reversal (RFR). RuvA specifically binds to HJ cruciform DNA, conferring on it an open structure. The RuvB hexamer acts as an ATP-dependent pump, pulling dsDNA into and through the RuvAB complex. RuvB forms 2 homohexamers on either side of HJ DNA bound by 1 or 2 RuvA tetramers; 4 subunits per hexamer contact DNA at a time. Coordinated motions by a converter formed by DNA-disengaged RuvB subunits stimulates ATP hydrolysis and nucleotide exchange. Immobilization of the converter enables RuvB to convert the ATP-contained energy into a lever motion, pulling 2 nucleotides of DNA out of the RuvA tetramer per ATP hydrolyzed, thus driving DNA branch migration. The RuvB motors rotate together with the DNA substrate, which together with the progressing nucleotide cycle form the mechanistic basis for DNA recombination by continuous HJ branch migration. Branch migration allows RuvC to scan DNA until it finds its consensus sequence, where it cleaves and resolves cruciform DNA. The protein is Holliday junction branch migration complex subunit RuvB of Helicobacter pylori (strain HPAG1).